Reading from the N-terminus, the 65-residue chain is MIKKKSHSGLKKRIKISKNKKILRGHAYKNHLAASKTTKQNRQLRGLTMVHKSDVKRIKIMLNNL.

The protein belongs to the bacterial ribosomal protein bL35 family.

This is Large ribosomal subunit protein bL35 from Phytoplasma mali (strain AT).